Here is a 509-residue protein sequence, read N- to C-terminus: H/ACA ribonucleoprotein complex subunit DKC1 (509 aa).

The tract at residues 1–24 (MADAEVITFPKKHKKKKDRKPLQE) is disordered. Residue Ala2 is modified to N-acetylalanine. A nucleolar localization region spans residues 2 to 21 (ADAEVITFPKKHKKKKDRKP). Residues 10 to 19 (PKKHKKKKDR) are compositionally biased toward basic residues. Residues Lys20, Lys39, and Lys43 each participate in a glycyl lysine isopeptide (Lys-Gly) (interchain with G-Cter in SUMO2) cross-link. The Nucleophile role is filled by Asp125. A Glycyl lysine isopeptide (Lys-Gly) (interchain with G-Cter in SUMO2) cross-link involves residue Lys191. The region spanning 297-372 (KRLVMKDSAV…VAKIKRVIME (76 aa)) is the PUA domain. Ser387 is subject to Phosphoserine. Residue Lys394 forms a Glycyl lysine isopeptide (Lys-Gly) (interchain with G-Cter in SUMO2) linkage. Residue Lys413 forms a Glycyl lysine isopeptide (Lys-Gly) (interchain with G-Cter in SUMO1); alternate linkage. Residue Lys413 forms a Glycyl lysine isopeptide (Lys-Gly) (interchain with G-Cter in SUMO2); alternate linkage. Residue Lys424 forms a Glycyl lysine isopeptide (Lys-Gly) (interchain with G-Cter in SUMO2) linkage. Residues 446-509 (KRKRDSESES…KVKVVEEMSE (64 aa)) are nuclear and nucleolar localization. The interval 447–509 (RKRDSESESD…KVKVVEEMSE (63 aa)) is disordered. 3 positions are modified to phosphoserine: Ser451, Ser453, and Ser455. Phosphothreonine is present on Thr458. A compositionally biased stretch (basic residues) spans 466–476 (EKKKKKDKKPK). Ser481 carries the post-translational modification Phosphoserine. Thr485 is modified (phosphothreonine). Ser508 is subject to Phosphoserine.

Belongs to the pseudouridine synthase TruB family. In terms of assembly, part of the H/ACA small nucleolar ribonucleoprotein (H/ACA snoRNP) complex, which contains NHP2/NOLA2, GAR1/NOLA1, NOP10/NOLA3, and DKC1/NOLA4, which is presumed to be the catalytic subunit. The complex contains a stable core formed by binding of one or two NOP10-DKC1 heterodimers to NHP2; GAR1 subsequently binds to this core via DKC1. The complex binds a box H/ACA small nucleolar RNA (snoRNA), which may target the specific site of modification within the RNA substrate. During assembly, the complex contains NAF1 instead of GAR1/NOLA1. The complex also interacts with TERC, which contains a 3'-terminal domain related to the box H/ACA snoRNAs. Specific interactions with snoRNAs or TERC are mediated by GAR1 and NHP2. Associates with NOLC1/NOPP140. H/ACA snoRNPs interact with the SMN complex, consisting of SMN1 or SMN2, GEMIN2/SIP1, DDX20/GEMIN3, and GEMIN4. This is mediated by interaction between GAR1 and SMN1 or SMN2. The SMN complex may be required for correct assembly of the H/ACA snoRNP complex. Component of the telomerase holoenzyme complex composed of one molecule of TERT, one molecule of WRAP53/TCAB1, two molecules of H/ACA ribonucleoprotein complex subunits DKC1, NOP10, NHP2 and GAR1, and a telomerase RNA template component (TERC). The telomerase holoenzyme complex is associated with TEP1, SMG6/EST1A and POT1. Interacts with SHQ1; this interaction may lead to the stabilization of DKC1, from the time of its synthesis until its association with NOP10, NHP2, and NAF1 at the nascent H/ACA RNA. Interacts with HMBOX1. Interacts with DHX36. Ubiquitously expressed, with elevated levels in Purkinje cells, the olfactory bulb, and Leydig cells of the testis.

It is found in the nucleus. The protein resides in the nucleolus. Its subcellular location is the cajal body. The catalysed reaction is uridine in 5S rRNA = pseudouridine in 5S rRNA. Catalytic subunit of H/ACA small nucleolar ribonucleoprotein (H/ACA snoRNP) complex, which catalyzes pseudouridylation of rRNA. This involves the isomerization of uridine such that the ribose is subsequently attached to C5, instead of the normal N1. Each rRNA can contain up to 100 pseudouridine ('psi') residues, which may serve to stabilize the conformation of rRNAs. Required for ribosome biogenesis and telomere maintenance. Also required for correct processing or intranuclear trafficking of TERC, the RNA component of the telomerase reverse transcriptase (TERT) holoenzyme. The chain is H/ACA ribonucleoprotein complex subunit DKC1 (Dkc1) from Mus musculus (Mouse).